We begin with the raw amino-acid sequence, 267 residues long: 4-hydroxy-tetrahydrodipicolinate reductase (267 aa).

NAD(+) is bound at residue 8-13 (GAAGRM). Position 35 (R35) interacts with NADP(+). NAD(+) is bound by residues 98–100 (GTT) and 122–125 (AANF). H155 functions as the Proton donor/acceptor in the catalytic mechanism. H156 contacts (S)-2,3,4,5-tetrahydrodipicolinate. The active-site Proton donor is the K159. 165 to 166 (GT) provides a ligand contact to (S)-2,3,4,5-tetrahydrodipicolinate.

This sequence belongs to the DapB family.

It localises to the cytoplasm. It carries out the reaction (S)-2,3,4,5-tetrahydrodipicolinate + NAD(+) + H2O = (2S,4S)-4-hydroxy-2,3,4,5-tetrahydrodipicolinate + NADH + H(+). The enzyme catalyses (S)-2,3,4,5-tetrahydrodipicolinate + NADP(+) + H2O = (2S,4S)-4-hydroxy-2,3,4,5-tetrahydrodipicolinate + NADPH + H(+). It functions in the pathway amino-acid biosynthesis; L-lysine biosynthesis via DAP pathway; (S)-tetrahydrodipicolinate from L-aspartate: step 4/4. Its function is as follows. Catalyzes the conversion of 4-hydroxy-tetrahydrodipicolinate (HTPA) to tetrahydrodipicolinate. This chain is 4-hydroxy-tetrahydrodipicolinate reductase, found in Azotobacter vinelandii (strain DJ / ATCC BAA-1303).